Reading from the N-terminus, the 309-residue chain is HTH-type transcriptional activator AaeR (309 aa).

Residues 1–59 (MERLKRMSVFAKVVEFGSFTAAARQLQMSVSSISQTVSKLEDELQVKLLNRSTRSIGLT) enclose the HTH lysR-type domain. The H-T-H motif DNA-binding region spans 19–38 (FTAAARQLQMSVSSISQTVS).

Belongs to the LysR transcriptional regulatory family.

With respect to regulation, activity is regulated by p-hydroxybenzoic acid. Its function is as follows. Transcriptional regulator that activates expression of the aaeXAB operon, which is involved in the efflux of aromatic carboxylic acids such as p-hydroxybenzoic acid (pHBA). In the presence of the effector pHBA, acts by binding to a single target within the aaeXAB-aaeR intergenic region. In the absence of pHBA, binds more than 50 sites along the E.coli K12 genome, including genes related to biofilm formation and several genes involved in stress response, suggesting that it might play a role in quorum sensing in the absence of pHBA. The sequence is that of HTH-type transcriptional activator AaeR from Escherichia coli (strain K12).